A 189-amino-acid chain; its full sequence is Interferon alpha-4 (189 aa).

A signal peptide spans methionine 1–glycine 23. Disulfide bonds link cysteine 24-cysteine 122 and cysteine 52-cysteine 162.

The protein belongs to the alpha/beta interferon family.

Its subcellular location is the secreted. Functionally, produced by macrophages, IFN-alpha have antiviral activities. Interferon stimulates the production of two enzymes: a protein kinase and an oligoadenylate synthetase. This is Interferon alpha-4 (IFNA4) from Homo sapiens (Human).